The primary structure comprises 138 residues: ATP synthase epsilon chain 2 (138 aa).

The protein belongs to the ATPase epsilon chain family. In terms of assembly, F-type ATPases have 2 components, CF(1) - the catalytic core - and CF(0) - the membrane proton channel. CF(1) has five subunits: alpha(3), beta(3), gamma(1), delta(1), epsilon(1). CF(0) has three main subunits: a, b and c.

It localises to the cell inner membrane. Produces ATP from ADP in the presence of a proton gradient across the membrane. The polypeptide is ATP synthase epsilon chain 2 (Syntrophotalea carbinolica (strain DSM 2380 / NBRC 103641 / GraBd1) (Pelobacter carbinolicus)).